Reading from the N-terminus, the 101-residue chain is Unclassified hydrophobin dewD (101 aa).

Positions 1–21 are cleaved as a signal peptide; sequence MHLSTSAAAILALSLAGPTMA. 4 disulfides stabilise this stretch: Cys-27/Cys-81, Cys-41/Cys-73, Cys-42/Cys-60, and Cys-82/Cys-91.

As to quaternary structure, self-assembles to form functional amyloid fibrils called rodlets. Self-assembly into fibrillar rodlets occurs spontaneously at hydrophobic:hydrophilic interfaces and the rodlets further associate laterally to form amphipathic monolayers.

It localises to the secreted. The protein resides in the spore wall. Its function is as follows. Aerial growth, conidiation, and dispersal of filamentous fungi in the environment rely upon a capability of their secreting small amphipathic proteins called hydrophobins (HPBs) with low sequence identity. Class I can self-assemble into an outermost layer of rodlet bundles on aerial cell surfaces, conferring cellular hydrophobicity that supports fungal growth, development and dispersal; whereas Class II form highly ordered films at water-air interfaces through intermolecular interactions but contribute nothing to the rodlet structure. DewD is an unclassified hydrophobin that contributes to the hydrophobicity of the spore surface. The protein is Unclassified hydrophobin dewD of Emericella nidulans (strain FGSC A4 / ATCC 38163 / CBS 112.46 / NRRL 194 / M139) (Aspergillus nidulans).